Here is a 433-residue protein sequence, read N- to C-terminus: Tol-Pal system protein TolB (433 aa).

The signal sequence occupies residues 1–21 (MIKRLRGLLVMLCCVAGMAVA).

Belongs to the TolB family. In terms of assembly, the Tol-Pal system is composed of five core proteins: the inner membrane proteins TolA, TolQ and TolR, the periplasmic protein TolB and the outer membrane protein Pal. They form a network linking the inner and outer membranes and the peptidoglycan layer.

The protein localises to the periplasm. Part of the Tol-Pal system, which plays a role in outer membrane invagination during cell division and is important for maintaining outer membrane integrity. The protein is Tol-Pal system protein TolB of Pseudomonas putida (strain ATCC 47054 / DSM 6125 / CFBP 8728 / NCIMB 11950 / KT2440).